Reading from the N-terminus, the 313-residue chain is Spermatid maturation protein 1 (313 aa).

A helical membrane pass occupies residues 29 to 49 (ILLLLGLIICINIGINMVTLL). 4 disordered regions span residues 71-90 (KLRS…PAVH), 97-151 (AVKM…HNWD), 243-263 (EPPI…SSGR), and 291-313 (LASG…MTER). The segment covering 76 to 85 (GKQTQPSKHS) has biased composition (polar residues). The span at 107-122 (TRRRHRRGSSSRRARR) shows a compositional bias: basic residues. The stretch at 263–289 (RVTYDARDVRRRLRELTREVEALSHCY) forms a coiled coil. Positions 300–313 (GTRKDWVYRSMTER) are enriched in basic and acidic residues.

Its subcellular location is the membrane. The protein resides in the cytoplasm. Functionally, required for proper cytoplasm removal during spermatogenesis. In Bos taurus (Bovine), this protein is Spermatid maturation protein 1 (SPEM1).